Consider the following 468-residue polypeptide: MGRVRKSDFGSIVLVLCCVLNSLLCNGGITSRYVRKLEATVDMPLDSDVFRVPCGYNAPQQVHITQGDVEGKAVIVSWVTQEAKGSNKVIYWKENSTKKHKAHGKTNTYKFYNYTSGFIHHCPIRNLEYDTKYYYVLGVGQTERKFWFFTPPEIGPDVPYTFGLIGDLGQSYDSNITLTHYENNPTKGQAVLFVGDISYADTYPDHDNRRWDSWGRFAERSTAYQPWIWTTGNHELDFAPEIGENRPFKPFTHRYRTPYRSSGSTEPFWYSIKRGPAYIIVLASYSAYGKYTPQYQWLEEEFPKVNRTETPWLIVLMHSPWYNSYDYHYMEGETMRVMYEAWFVKYKVDVVFAGHVHAYERSERVSNIAYNVVNGICTPVKDQSAPVYITIGDGGNIEGLATKMTEPQPKYSAFREASFGHAIFSIKNRTHAHYGWHRNHDGYAVEGDRMWFYNRFWHPVDDSPSCNS.

The first 25 residues, 1–25 (MGRVRKSDFGSIVLVLCCVLNSLLC), serve as a signal peptide directing secretion. N-linked (GlcNAc...) asparagine glycosylation is found at asparagine 95 and asparagine 113. Aspartate 167 provides a ligand contact to Fe cation. N-linked (GlcNAc...) asparagine glycosylation occurs at asparagine 175. The Fe cation site is built by aspartate 196 and tyrosine 199. Residue aspartate 196 participates in Zn(2+) binding. Asparagine 233 serves as a coordination point for Zn(2+). Residue asparagine 233 participates in substrate binding. N-linked (GlcNAc...) asparagine glycosylation is present at asparagine 306. Zn(2+) is bound at residue histidine 318. Histidine 328 serves as the catalytic Proton donor. Histidine 355 contacts Zn(2+). Residue 355-357 (HVH) coordinates substrate. Fe cation is bound at residue histidine 357. Residue asparagine 428 is glycosylated (N-linked (GlcNAc...) asparagine).

Belongs to the metallophosphoesterase superfamily. Purple acid phosphatase family. In terms of assembly, homodimer; disulfide-linked. The cofactor is Fe cation. Requires Zn(2+) as cofactor. In terms of tissue distribution, expressed in roots, stems, leaves, flowers and siliques.

The protein localises to the secreted. Its subcellular location is the cytoplasm. It carries out the reaction a phosphate monoester + H2O = an alcohol + phosphate. This chain is Purple acid phosphatase 10 (PAP10), found in Arabidopsis thaliana (Mouse-ear cress).